Consider the following 253-residue polypeptide: MGTILDKIVDQKKKEVAALYETYTPVKEKRKTRSLVKALEQFTVIAEVKRASPSKGDINLHVDVRKQVKTYEGCGAGAVSVLTDGQFFKGSFYDLQTAREESSIPLLCKDFIIDKIQIDRAYEAGADIILLIVAALTKEKLKELYSYVLEKGLEAIVEVHDEKELEIAIQLNPHVIGINNRNLKTFEVDLSQTEKLGKRLNEEKLLWISESGIHSKEDIICVKRAGAKGVLVGEALMTSSSIHTFFEDCKVNI.

Belongs to the TrpC family.

The catalysed reaction is 1-(2-carboxyphenylamino)-1-deoxy-D-ribulose 5-phosphate + H(+) = (1S,2R)-1-C-(indol-3-yl)glycerol 3-phosphate + CO2 + H2O. It participates in amino-acid biosynthesis; L-tryptophan biosynthesis; L-tryptophan from chorismate: step 4/5. The protein is Indole-3-glycerol phosphate synthase of Bacillus thuringiensis (strain Al Hakam).